The primary structure comprises 199 residues: Chaperone protein TorD (199 aa).

The protein belongs to the TorD/DmsD family. TorD subfamily.

Its subcellular location is the cytoplasm. Functionally, involved in the biogenesis of TorA. Acts on TorA before the insertion of the molybdenum cofactor and, as a result, probably favors a conformation of the apoenzyme that is competent for acquiring the cofactor. This chain is Chaperone protein TorD, found in Shigella dysenteriae serotype 1 (strain Sd197).